The sequence spans 257 residues: Dihydroorotate dehydrogenase B (NAD(+)), electron transfer subunit (257 aa).

The 101-residue stretch at 2-102 (MKQEQMTVVR…LGPLGNGFPL (101 aa)) folds into the FAD-binding FR-type domain. FAD-binding positions include 53–56 (RPLS), 70–72 (IYR), and 77–78 (GT). The [2Fe-2S] cluster site is built by Cys221, Cys226, Cys229, and Cys244.

This sequence belongs to the PyrK family. In terms of assembly, heterotetramer of 2 PyrK and 2 PyrD type B subunits. [2Fe-2S] cluster serves as cofactor. Requires FAD as cofactor.

It participates in pyrimidine metabolism; UMP biosynthesis via de novo pathway; orotate from (S)-dihydroorotate (NAD(+) route): step 1/1. Its function is as follows. Responsible for channeling the electrons from the oxidation of dihydroorotate from the FMN redox center in the PyrD type B subunit to the ultimate electron acceptor NAD(+). This chain is Dihydroorotate dehydrogenase B (NAD(+)), electron transfer subunit, found in Geobacillus sp. (strain WCH70).